Reading from the N-terminus, the 166-residue chain is Probable chemoreceptor glutamine deamidase CheD (166 aa).

The protein belongs to the CheD family.

The catalysed reaction is L-glutaminyl-[protein] + H2O = L-glutamyl-[protein] + NH4(+). Its function is as follows. Probably deamidates glutamine residues to glutamate on methyl-accepting chemotaxis receptors (MCPs), playing an important role in chemotaxis. This Oceanobacillus iheyensis (strain DSM 14371 / CIP 107618 / JCM 11309 / KCTC 3954 / HTE831) protein is Probable chemoreceptor glutamine deamidase CheD.